The following is a 300-amino-acid chain: Protoheme IX farnesyltransferase (300 aa).

A run of 9 helical transmembrane segments spans residues 24-44 (VTQL…PGMV), 48-68 (VLLG…AINC), 94-114 (LQIL…LYTF), 118-138 (LTMW…TLLL), 146-166 (IVIG…AVTG), 172-192 (AWIL…VLAL), 217-237 (LHIL…FISG), 239-259 (SGAV…AYAW), and 278-298 (IVYL…RPVI).

Belongs to the UbiA prenyltransferase family. Protoheme IX farnesyltransferase subfamily.

The protein localises to the cell inner membrane. It carries out the reaction heme b + (2E,6E)-farnesyl diphosphate + H2O = Fe(II)-heme o + diphosphate. Its pathway is porphyrin-containing compound metabolism; heme O biosynthesis; heme O from protoheme: step 1/1. In terms of biological role, converts heme B (protoheme IX) to heme O by substitution of the vinyl group on carbon 2 of heme B porphyrin ring with a hydroxyethyl farnesyl side group. This is Protoheme IX farnesyltransferase from Burkholderia pseudomallei (strain 1106a).